The primary structure comprises 348 residues: Isopentenyl-diphosphate delta-isomerase (348 aa).

Substrate is bound at residue 5–6 (RK). FMN-binding positions include S61, 62 to 64 (SMT), S92, and N120. 92-94 (SMR) contributes to the substrate binding site. Q159 is a binding site for substrate. E160 provides a ligand contact to Mg(2+). FMN contacts are provided by residues K189, S214, T219, 269–271 (GLR), and 290–291 (AR).

The protein belongs to the IPP isomerase type 2 family. As to quaternary structure, homooctamer. Dimer of tetramers. It depends on FMN as a cofactor. NADPH is required as a cofactor. Mg(2+) serves as cofactor.

The protein resides in the cytoplasm. The catalysed reaction is isopentenyl diphosphate = dimethylallyl diphosphate. Its function is as follows. Involved in the biosynthesis of isoprenoids. Catalyzes the 1,3-allylic rearrangement of the homoallylic substrate isopentenyl (IPP) to its allylic isomer, dimethylallyl diphosphate (DMAPP). The protein is Isopentenyl-diphosphate delta-isomerase of Thermoplasma acidophilum (strain ATCC 25905 / DSM 1728 / JCM 9062 / NBRC 15155 / AMRC-C165).